Here is a 212-residue protein sequence, read N- to C-terminus: Phosphoribosylglycinamide formyltransferase (212 aa).

12-14 (GTN) lines the N(1)-(5-phospho-beta-D-ribosyl)glycinamide pocket. Residues 90 to 93 (MKIL) and Asn107 each bind (6R)-10-formyltetrahydrofolate. His109 acts as the Proton donor in catalysis.

Belongs to the GART family.

It carries out the reaction N(1)-(5-phospho-beta-D-ribosyl)glycinamide + (6R)-10-formyltetrahydrofolate = N(2)-formyl-N(1)-(5-phospho-beta-D-ribosyl)glycinamide + (6S)-5,6,7,8-tetrahydrofolate + H(+). The protein operates within purine metabolism; IMP biosynthesis via de novo pathway; N(2)-formyl-N(1)-(5-phospho-D-ribosyl)glycinamide from N(1)-(5-phospho-D-ribosyl)glycinamide (10-formyl THF route): step 1/1. Its function is as follows. Catalyzes the transfer of a formyl group from 10-formyltetrahydrofolate to 5-phospho-ribosyl-glycinamide (GAR), producing 5-phospho-ribosyl-N-formylglycinamide (FGAR) and tetrahydrofolate. The protein is Phosphoribosylglycinamide formyltransferase of Haemophilus influenzae (strain ATCC 51907 / DSM 11121 / KW20 / Rd).